The following is a 908-amino-acid chain: Serine/threonine-protein kinase WARTS homolog (908 aa).

Positions 42–70 (EIRVGRHRAKLDEIRESLKAYEHEAGLLS) form a coiled coil. Low complexity-rich tracts occupy residues 115–125 (VSSAAVSNSNS) and 168–181 (PSTTISSTPSTTTE). Disordered stretches follow at residues 115-134 (VSSAAVSNSNSFRTEGGGHK), 162-183 (MIRNGNPSTTISSTPSTTTEES), 203-225 (NNNAPQYSPGYSRPPPPAYDSSP), and 388-412 (KSRAQPPPPQYNQPSEPPPKRVSSP). The segment covering 392-404 (QPPPPQYNQPSEP) has biased composition (pro residues). A coiled-coil region spans residues 439-470 (YMEQHVERLLQQYKEREKRMKQLEKEMVSAQL). The Protein kinase domain maps to 502 to 807 (FTVISHIGVG…TAQVKNHPWF (306 aa)). Residues 508–516 (IGVGAFGKV) and K531 each bind ATP. Residue D625 is the Proton acceptor of the active site. Residues 808-874 (RGIDWVNLRK…RHFFDTDSVG (67 aa)) enclose the AGC-kinase C-terminal domain.

Belongs to the protein kinase superfamily. AGC Ser/Thr protein kinase family. Interacts (via N-terminus) with yap-1 (via WW domain). The cofactor is Mg(2+). Expressed in muscles and epithelial tissues including pharynx, intestine and hypodermis. Expressed in vulval and spermathecal seam cells.

The protein localises to the cytoplasm. Its subcellular location is the apical cell membrane. The enzyme catalyses L-seryl-[protein] + ATP = O-phospho-L-seryl-[protein] + ADP + H(+). It catalyses the reaction L-threonyl-[protein] + ATP = O-phospho-L-threonyl-[protein] + ADP + H(+). Its function is as follows. Phosphorylates yap-1 which may negatively regulate yap-1 nuclear localization. Plays an essential role in larval development. Regulates growth, the formation of gut granules, lifespan and cell and body sizes probably in synergy with the TGF-beta sma/mab pathway. Does not appear to regulate apoptosis and proliferation. In addition, may synergize with the TGF-beta daf-7 dauer pathway to regulate entry into the dauer stage. Maintains the cellular integrity of intestinal cells by regulating the localization of apical actin and junctional proteins. This is Serine/threonine-protein kinase WARTS homolog from Caenorhabditis elegans.